The following is a 396-amino-acid chain: dTDP-epi-vancosaminyltransferase (396 aa).

Position 10-12 (10-12 (SRG)) interacts with dTDP-beta-L-4-epi-vancosamine. Residues D127, Q133, Y141, and Y169 each contribute to the devancoaminyl-vancomycin site. DTDP-beta-L-4-epi-vancosamine-binding positions include R207, S230, 277-278 (EV), and 293-298 (HDSAGT).

Belongs to the glycosyltransferase 28 family.

The enzyme catalyses dTDP-beta-L-4-epi-vancosamine + devancoaminyl-vancomycin = chloroorienticin B + dTDP + H(+). The protein operates within antibiotic biosynthesis; vancomycin biosynthesis. Functionally, catalyzes the attachment of 4-epi-vancosamine from a TDP donor to the beta-OH-Tyr-6 of the aglycone cosubstrate in the biosynthesis of glycopeptide antibiotic chloroeremomycin, a member of the vancomycin group of antibiotics. Strongly prefers devancoaminyl-vancomycin (DVV) as substrate rather than the heptapeptide vancomycin aglycone (AGV). Acts downstream of GtfB. This chain is dTDP-epi-vancosaminyltransferase (gtfA), found in Amycolatopsis orientalis (Nocardia orientalis).